A 241-amino-acid polypeptide reads, in one-letter code: Glutathione S-transferase theta-3 (241 aa).

The region spanning 2–82 (GLELYLDLMS…YLSRKYKAPD (81 aa)) is the GST N-terminal domain. Glutathione contacts are provided by residues 53–54 (KV) and 66–67 (ES). The GST C-terminal domain maps to 88–222 (DLQTRARVDE…VVLKAKDMPP (135 aa)).

The protein belongs to the GST superfamily. Theta family. In terms of assembly, homodimer. As to expression, expressed strongly in liver, and at lower levels in kidney and testis.

It is found in the cytoplasm. It carries out the reaction RX + glutathione = an S-substituted glutathione + a halide anion + H(+). Its function is as follows. Conjugation of reduced glutathione to a wide number of exogenous and endogenous hydrophobic electrophiles. Shows high activity towards 4-nitrobenzyl chloride (4-NBC). Also has lower activity towards 1,2-epoxy-3-(p-nitrophenoxy)propane (EPNP), cumene hydroperoxide, 1-chloro-2,4-dinitrobenzene (CDNB), 7-chloro-4-nitrobenzo-2-oxa-1,3-diazole (NBD-Cl), and ethacrynic acid. This Mus musculus (Mouse) protein is Glutathione S-transferase theta-3.